The chain runs to 386 residues: WD repeat-containing protein 89 (386 aa).

WD repeat units follow at residues 21–65 (KEPT…LLRE), 68–107 (GSPGLLNGVRFANSCDNVYSASTDGTVKCWDARLASEKPA), 112–156 (GYPS…QDLS), 167–207 (THSD…EEDA), 213–253 (NSVS…TDEP), and 318–357 (GHAATVRSFCWTVSEDSLLTGGEDAQLLLWKPGAVEKTFT).

The protein is WD repeat-containing protein 89 (Wdr89) of Rattus norvegicus (Rat).